We begin with the raw amino-acid sequence, 743 residues long: tRNA(Met) cytidine acetyltransferase TmcA (743 aa).

ATP contacts are provided by residues Gln216, 241–250 (GRGKSASIGL), and Arg390. An N-acetyltransferase domain is found at 420-604 (LKIEDVSQEE…YSVIVIRALS (185 aa)). Acetyl-CoA is bound by residues 531–533 (IAV) and 538–544 (QGKGIGS).

The protein belongs to the RNA cytidine acetyltransferase family. TmcA subfamily.

Its subcellular location is the cytoplasm. The catalysed reaction is cytidine(34) in elongator tRNA(Met) + acetyl-CoA + ATP + H2O = N(4)-acetylcytidine(34) in elongator tRNA(Met) + ADP + phosphate + CoA + H(+). In terms of biological role, catalyzes the formation of N(4)-acetylcytidine (ac(4)C) at the wobble position of tRNA(Met), by using acetyl-CoA as an acetyl donor and ATP (or GTP). The sequence is that of tRNA(Met) cytidine acetyltransferase TmcA from Saccharolobus islandicus (strain Y.G.57.14 / Yellowstone #1) (Sulfolobus islandicus).